The chain runs to 568 residues: MSVSVFNRCWSKVILETLVRQGVSHVCIAPGSRSTPLTLEAVRLQNAGSVTCHTHFDERGLGFFALGIAKATQSPVAIIVTSGTATANLYPAIIEARQTGVNLFVLTADRPPELWECGANQAILQQNMFGQYPVANVNLPKPNADYSAQWLISLLEQAAFQQKQQGGVVHINVPFTEPLYDATDEEVNSHSWLQPLQRWLIQNKSWINVEVQQNEVLMHENWDHWRTKRGVVVVGQLPAEQAMGINSWASAMGWVLLTDIQSGVVPTTPYEDIWLANQTVREKLLQADIVIQFGARFISKRINQFLQAFKGEFWLVEQSGKALDPYHHSLTRFNAKAHHWLRAHPPLRQKPWLLEPLALSKFCATFIEQQVGGNLTEASLALRLPTLLPYNGVLFLGNSLLVRLVDALTQLPESYPVYTNRGASGIDGLLATAAGIGIGSNKPVVAVIGDTSTLYDLNSFALFKNVTQPTLIFVINNNGGAIFDMLPVDEQVKDQFYRLPHNGDFSQIAAMFDLKYAHPYTWADLNSVVKQAYSRRKATLIEIKTNPSDGSSLYKRLIDQISHAVIGA.

This sequence belongs to the TPP enzyme family. MenD subfamily. Homodimer. Requires Mg(2+) as cofactor. It depends on Mn(2+) as a cofactor. The cofactor is thiamine diphosphate.

It catalyses the reaction isochorismate + 2-oxoglutarate + H(+) = 5-enolpyruvoyl-6-hydroxy-2-succinyl-cyclohex-3-ene-1-carboxylate + CO2. The protein operates within quinol/quinone metabolism; 1,4-dihydroxy-2-naphthoate biosynthesis; 1,4-dihydroxy-2-naphthoate from chorismate: step 2/7. It functions in the pathway quinol/quinone metabolism; menaquinone biosynthesis. Its function is as follows. Catalyzes the thiamine diphosphate-dependent decarboxylation of 2-oxoglutarate and the subsequent addition of the resulting succinic semialdehyde-thiamine pyrophosphate anion to isochorismate to yield 2-succinyl-5-enolpyruvyl-6-hydroxy-3-cyclohexene-1-carboxylate (SEPHCHC). The protein is 2-succinyl-5-enolpyruvyl-6-hydroxy-3-cyclohexene-1-carboxylate synthase of Haemophilus influenzae (strain 86-028NP).